The primary structure comprises 161 residues: uncharacterized protein (161 aa).

A compositionally biased stretch (polar residues) spans 1–10 (MSKQQEQDTP). 3 disordered regions span residues 1 to 20 (MSKQQEQDTPSFGEIRQRLQ), 55 to 84 (KKTREEQIAEDEHAASLRRLGHAERSMSDE), and 118 to 161 (LLQQ…ANNS). Residues 82–107 (SDEEYARQLQEEMDRLDASIQMDKEA) adopt a coiled-coil conformation. Over residues 144–161 (QQSSNTTTSSSCQSANNS) the composition is skewed to low complexity.

This is an uncharacterized protein from Caenorhabditis elegans.